The primary structure comprises 470 residues: tRNA-2-methylthio-N(6)-dimethylallyladenosine synthase (470 aa).

One can recognise an MTTase N-terminal domain in the interval M1–H116. C10, C45, C79, C153, C157, and C160 together coordinate [4Fe-4S] cluster. Positions R139–E369 constitute a Radical SAM core domain. Positions R372–L439 constitute a TRAM domain.

It belongs to the methylthiotransferase family. MiaB subfamily. As to quaternary structure, monomer. [4Fe-4S] cluster is required as a cofactor.

Its subcellular location is the cytoplasm. The enzyme catalyses N(6)-dimethylallyladenosine(37) in tRNA + (sulfur carrier)-SH + AH2 + 2 S-adenosyl-L-methionine = 2-methylsulfanyl-N(6)-dimethylallyladenosine(37) in tRNA + (sulfur carrier)-H + 5'-deoxyadenosine + L-methionine + A + S-adenosyl-L-homocysteine + 2 H(+). Its function is as follows. Catalyzes the methylthiolation of N6-(dimethylallyl)adenosine (i(6)A), leading to the formation of 2-methylthio-N6-(dimethylallyl)adenosine (ms(2)i(6)A) at position 37 in tRNAs that read codons beginning with uridine. This chain is tRNA-2-methylthio-N(6)-dimethylallyladenosine synthase, found in Tropheryma whipplei (strain Twist) (Whipple's bacillus).